Here is a 614-residue protein sequence, read N- to C-terminus: Dolichyl-diphosphooligosaccharide--protein glycosyltransferase subunit 1A (614 aa).

The first 25 residues, 1 to 25 (MKQSSVVDLLLLLLAIALLATPAFS), serve as a signal peptide directing secretion. The Lumenal segment spans residues 26–432 (DLVLSKVERR…QVYYKFSNIN (407 aa)). Residues N94 and N299 are each glycosylated (N-linked (GlcNAc...) asparagine). Residue K311 forms a Glycyl lysine isopeptide (Lys-Gly) (interchain with G-Cter in ubiquitin) linkage. A glycan (N-linked (GlcNAc...) asparagine) is linked at N352. Residues 433–453 (LLSEPLMLISGFFILFITCII) traverse the membrane as a helical segment. At 454–614 (YTRADISISK…EDLLEFIDEI (161 aa)) the chain is on the cytoplasmic side.

This sequence belongs to the OST1 family. In terms of assembly, component of the oligosaccharyltransferase (OST) complex.

The protein resides in the endoplasmic reticulum membrane. The protein operates within protein modification; protein glycosylation. Its function is as follows. Subunit of the oligosaccharyl transferase (OST) complex that catalyzes the initial transfer of a defined glycan (Glc(3)Man(9)GlcNAc(2) in eukaryotes) from the lipid carrier dolichol-pyrophosphate to an asparagine residue within an Asn-X-Ser/Thr consensus motif in nascent polypeptide chains, the first step in protein N-glycosylation. N-glycosylation occurs cotranslationally and the complex associates with the Sec61 complex at the channel-forming translocon complex that mediates protein translocation across the endoplasmic reticulum (ER). All subunits are required for a maximal enzyme activity. This chain is Dolichyl-diphosphooligosaccharide--protein glycosyltransferase subunit 1A (OST1A), found in Arabidopsis thaliana (Mouse-ear cress).